Here is a 217-residue protein sequence, read N- to C-terminus: Oxygen-insensitive NAD(P)H nitroreductase (217 aa).

10–14 (RYSTK) is an FMN binding site. Residues K14, T41, N71, K74, and R107 each contribute to the NAD(+) site. N71 contributes to the FMN binding site. Residues 165 to 166 (EG) and 205 to 207 (KSR) contribute to the FMN site.

The protein belongs to the nitroreductase family. In terms of assembly, homodimer. FMN serves as cofactor.

Its function is as follows. Reduction of a variety of nitroaromatic compounds using NADH (and to lesser extent NADPH) as source of reducing equivalents; two electrons are transferred. Capable of reducing nitrofurazone. This is Oxygen-insensitive NAD(P)H nitroreductase from Salmonella typhimurium (strain LT2 / SGSC1412 / ATCC 700720).